The primary structure comprises 348 residues: Rhodopsin (348 aa).

Met1 bears the N-acetylmethionine mark. Over 1–36 (MNGTEGPNFYVPFSNKTGVVRSPFEYPQYYLAEPWQ) the chain is Extracellular. N-linked (GlcNAc...) asparagine glycosylation is found at Asn2 and Asn15. The chain crosses the membrane as a helical span at residues 37–61 (FSMLAAYMFLLIVLGFPINFLTLYV). Topologically, residues 62-73 (TVQHKKLRTPLN) are cytoplasmic. A helical transmembrane segment spans residues 74-96 (YILLNLAVADLFMVFGGFTTTLY). Residues 97–110 (TSLHGYFVFGPTGC) are Extracellular-facing. An intrachain disulfide couples Cys110 to Cys187. Residues 111–133 (NLEGFFATLGGEIALWSLVVLAI) traverse the membrane as a helical segment. The short motif at 134-136 (ERY) is the 'Ionic lock' involved in activated form stabilization element. Residues 134 to 152 (ERYVVVCKPMSNFRFGENH) are Cytoplasmic-facing. A helical transmembrane segment spans residues 153–173 (AIMGVAFTWVMALACAAPPLV). At 174 to 202 (GWSRYIPEGMQCSCGIDYYTLKPEVNNES) the chain is on the extracellular side. Glu201 contributes to the Zn(2+) binding site. Residues 203-224 (FVIYMFVVHFTIPMIVIFFCYG) form a helical membrane-spanning segment. Residues 225 to 252 (QLVFTVKEAAAQQQESATTQKAEKEVTR) are Cytoplasmic-facing. Residues 253-274 (MVIIMVIAFLICWVPYASVAFY) traverse the membrane as a helical segment. Over 275–286 (IFTHQGSNFGPI) the chain is Extracellular. Gln279 is a binding site for Zn(2+). Residues 287-308 (FMTLPAFFAKSSSIYNPVIYIM) form a helical membrane-spanning segment. Lys296 carries the N6-(retinylidene)lysine modification. Residues 309 to 348 (MNKQFRNCMLTTLCCGKNPLGDDEASTTGSKTETSQVAPA) lie on the Cytoplasmic side of the membrane. 2 S-palmitoyl cysteine lipidation sites follow: Cys322 and Cys323. Residues 330–348 (DDEASTTGSKTETSQVAPA) are interaction with SAG. Phosphoserine is present on Ser334. Phosphothreonine is present on residues Thr335 and Thr336. Residue Ser338 is modified to Phosphoserine. Phosphothreonine occurs at positions 340 and 342. Residue Ser343 is modified to Phosphoserine.

The protein belongs to the G-protein coupled receptor 1 family. Opsin subfamily. Homodimer. May form a complex composed of RHO, GRK1 and RCVRN in a Ca(2+)-dependent manner; RCVRN prevents the interaction between GRK1 and RHO. Interacts with GRK1. Interacts (phosphorylated form) with SAG. Interacts with GNAT1. Interacts with GNAT3. SAG and G-proteins compete for a common binding site. Interacts with PRCD; the interaction promotes PRCD stability. Forms a complex with ASAP1 and ARF4. Forms a complex with ASAP1, RAB11A, Rabin8/RAB3IP, ARF4 and RAB11FIP3; the complex regulates Golgi-to-cilia rhodopsin/RHO transport in photoreceptors. Post-translationally, phosphorylated on some or all of the serine and threonine residues present in the C-terminal region. Contains one covalently linked retinal chromophore. Upon light absorption, the covalently bound 11-cis-retinal is converted to all-trans-retinal. After hydrolysis of the Schiff base and release of the covalently bound all-trans-retinal, active rhodopsin is regenerated by binding of a fresh molecule of 11-cis-retinal.

It is found in the membrane. The protein resides in the cell projection. It localises to the cilium. The protein localises to the photoreceptor outer segment. Functionally, photoreceptor required for image-forming vision at low light intensity. Required for photoreceptor cell viability after birth. Light-induced isomerization of 11-cis to all-trans retinal triggers a conformational change that activates signaling via G-proteins. Subsequent receptor phosphorylation mediates displacement of the bound G-protein alpha subunit by the arrestin SAG and terminates signaling. In Felis catus (Cat), this protein is Rhodopsin (RHO).